A 222-amino-acid chain; its full sequence is Cytidylate kinase (222 aa).

7–15 provides a ligand contact to ATP; it reads GPAGAGKST.

Belongs to the cytidylate kinase family. Type 1 subfamily.

It is found in the cytoplasm. The catalysed reaction is CMP + ATP = CDP + ADP. It catalyses the reaction dCMP + ATP = dCDP + ADP. The protein is Cytidylate kinase of Carboxydothermus hydrogenoformans (strain ATCC BAA-161 / DSM 6008 / Z-2901).